Here is a 123-residue protein sequence, read N- to C-terminus: MSITKDQIIEAVAAMSVMDVVELITAMEEKFGVSAAAAVAVAGAGAAAEAAEEKTEFDVILKAAGANKVAVIKAVRGATGLGLKEAKDLVESAPAALKEGVSKDDAEALKKSLEEAGAEVEVK.

This sequence belongs to the bacterial ribosomal protein bL12 family. Homodimer. Part of the ribosomal stalk of the 50S ribosomal subunit. Forms a multimeric L10(L12)X complex, where L10 forms an elongated spine to which 2 to 4 L12 dimers bind in a sequential fashion. Binds GTP-bound translation factors.

Functionally, forms part of the ribosomal stalk which helps the ribosome interact with GTP-bound translation factors. Is thus essential for accurate translation. In Salmonella arizonae (strain ATCC BAA-731 / CDC346-86 / RSK2980), this protein is Large ribosomal subunit protein bL12.